The chain runs to 761 residues: MKHTDIEVTLTHAEEHGLSAEEFSQICTILGRTPTITELGIFSVMWSEHCSYKNSIAVLKTLPREGGALLTSAGEENAGLVDIGDNLAVAFKIESHNHPSAVEPYQGAATGVGGIHRDIFTMGARPVASLNSLRFGSPKDPRVRYLVDGVVRGIGDYGNSFGVPTVAGDIYFEEGYTGNPLVNAMSVGIVEHHKTVSATAYGTGNPVLIVGSSTGRDGIHGATFASEDLSEASEEKRPSVQVGDPFAEKLLLEATLEAIETGYVVGLQDMGAAGITSSTSEMSARGIEKYGVGGIEIDLDLVPIREAGMSAYEIMLSESQERMLIVAAKGFEDKIIEVYQKWDVQAVVIGEVTDDNHVRVKHQGQVVANIPAISLVLGGGAPVYKREAKEKKPETPLANMVADSTLNFNELGLALLSRPNIASKQWVYRQYDSMVQTNTLTPTGQTDAAVIRIKGTNKGVAMKTDCNARYVYLNPLAGGKIAVAECARNIACTGARPLAITNCLNFGNPLKPEVYFQFKESVRGMGEACRTFNTPVTGGNVSFYNETFIAGQRTAIYPTPMIGMIGLLDNIENLVGSTFTASGDRILLLGNPQLTLDGSEYLVMQYGTPGQDAPAVDLEHEAQLQRLLVALAEQKLLHSAHDVSDGGLLVALAEKAMMNQEMPLSFRVHLSNNDKSETAIQQQLFSEAQGRVVLSAAPEAVAAIMALANDYNLPIQDIGEVVNQQTISLSINEQEVVNLPLSNVAHAYYHALEHALHLDEL.

Residue His49 is part of the active site. ATP-binding residues include Tyr52 and Lys92. Mg(2+) is bound at residue Glu94. Substrate contacts are provided by residues 95-98 and Arg117; that span reads SHNH. The active-site Proton acceptor is His96. Asp118 lines the Mg(2+) pocket. Substrate is bound at residue Gln241. Asp269 is a binding site for Mg(2+). 318–320 serves as a coordination point for substrate; the sequence is ESQ. Residues Asn502 and Gly539 each contribute to the ATP site. Residue Asn540 participates in Mg(2+) binding. Ser542 provides a ligand contact to substrate.

Belongs to the FGAMS family. As to quaternary structure, monomer. Part of the FGAM synthase complex composed of 1 PurL, 1 PurQ and 2 PurS subunits.

Its subcellular location is the cytoplasm. The catalysed reaction is N(2)-formyl-N(1)-(5-phospho-beta-D-ribosyl)glycinamide + L-glutamine + ATP + H2O = 2-formamido-N(1)-(5-O-phospho-beta-D-ribosyl)acetamidine + L-glutamate + ADP + phosphate + H(+). Its pathway is purine metabolism; IMP biosynthesis via de novo pathway; 5-amino-1-(5-phospho-D-ribosyl)imidazole from N(2)-formyl-N(1)-(5-phospho-D-ribosyl)glycinamide: step 1/2. In terms of biological role, part of the phosphoribosylformylglycinamidine synthase complex involved in the purines biosynthetic pathway. Catalyzes the ATP-dependent conversion of formylglycinamide ribonucleotide (FGAR) and glutamine to yield formylglycinamidine ribonucleotide (FGAM) and glutamate. The FGAM synthase complex is composed of three subunits. PurQ produces an ammonia molecule by converting glutamine to glutamate. PurL transfers the ammonia molecule to FGAR to form FGAM in an ATP-dependent manner. PurS interacts with PurQ and PurL and is thought to assist in the transfer of the ammonia molecule from PurQ to PurL. The polypeptide is Phosphoribosylformylglycinamidine synthase subunit PurL (Chlorobium chlorochromatii (strain CaD3)).